The sequence spans 278 residues: Thiazole synthase (278 aa).

Lysine 109 acts as the Schiff-base intermediate with DXP in catalysis. 1-deoxy-D-xylulose 5-phosphate is bound by residues glycine 170, 197–198, and 219–220; these read AG and NT.

It belongs to the ThiG family. In terms of assembly, homotetramer. Forms heterodimers with either ThiH or ThiS.

The protein localises to the cytoplasm. The enzyme catalyses [ThiS sulfur-carrier protein]-C-terminal-Gly-aminoethanethioate + 2-iminoacetate + 1-deoxy-D-xylulose 5-phosphate = [ThiS sulfur-carrier protein]-C-terminal Gly-Gly + 2-[(2R,5Z)-2-carboxy-4-methylthiazol-5(2H)-ylidene]ethyl phosphate + 2 H2O + H(+). The protein operates within cofactor biosynthesis; thiamine diphosphate biosynthesis. Its function is as follows. Catalyzes the rearrangement of 1-deoxy-D-xylulose 5-phosphate (DXP) to produce the thiazole phosphate moiety of thiamine. Sulfur is provided by the thiocarboxylate moiety of the carrier protein ThiS. In vitro, sulfur can be provided by H(2)S. In Cupriavidus pinatubonensis (strain JMP 134 / LMG 1197) (Cupriavidus necator (strain JMP 134)), this protein is Thiazole synthase.